A 518-amino-acid chain; its full sequence is Protein nucleotidyltransferase YdiU (518 aa).

Positions 1–10 (MTHLHFDNRL) are enriched in basic and acidic residues. The tract at residues 1 to 25 (MTHLHFDNRLRQQLPGDPEEGARRR) is disordered. Residues Gly100, Gly102, Arg103, Lys123, Asp135, Gly136, Arg193, and Arg200 each contribute to the ATP site. Asp270 (proton acceptor) is an active-site residue. Positions 271 and 280 each coordinate Mg(2+). Residue Asp280 coordinates ATP.

This sequence belongs to the SELO family. Requires Mg(2+) as cofactor. Mn(2+) serves as cofactor.

It catalyses the reaction L-seryl-[protein] + ATP = 3-O-(5'-adenylyl)-L-seryl-[protein] + diphosphate. It carries out the reaction L-threonyl-[protein] + ATP = 3-O-(5'-adenylyl)-L-threonyl-[protein] + diphosphate. The catalysed reaction is L-tyrosyl-[protein] + ATP = O-(5'-adenylyl)-L-tyrosyl-[protein] + diphosphate. The enzyme catalyses L-histidyl-[protein] + UTP = N(tele)-(5'-uridylyl)-L-histidyl-[protein] + diphosphate. It catalyses the reaction L-seryl-[protein] + UTP = O-(5'-uridylyl)-L-seryl-[protein] + diphosphate. It carries out the reaction L-tyrosyl-[protein] + UTP = O-(5'-uridylyl)-L-tyrosyl-[protein] + diphosphate. Its function is as follows. Nucleotidyltransferase involved in the post-translational modification of proteins. It can catalyze the addition of adenosine monophosphate (AMP) or uridine monophosphate (UMP) to a protein, resulting in modifications known as AMPylation and UMPylation. This Xanthomonas euvesicatoria pv. vesicatoria (strain 85-10) (Xanthomonas campestris pv. vesicatoria) protein is Protein nucleotidyltransferase YdiU.